We begin with the raw amino-acid sequence, 261 residues long: Protein unc-50 homolog (261 aa).

Transmembrane regions (helical) follow at residues 37 to 57 (IFHYPQMDIEYTFWIMFYLCF), 82 to 102 (AFAVILVFFMAIASMSYAITF), 113 to 133 (VMFWAVFVDFITVGLLIATIG), 166 to 186 (SFFPLFIILYVVQFFLLPILL), 190 to 210 (LFAAILSNTLYIIGFSYYYYV), and 225 to 245 (VVFLYPIGILFALYIVSVVMG).

It belongs to the unc-50 family.

Its subcellular location is the membrane. The sequence is that of Protein unc-50 homolog from Dictyostelium discoideum (Social amoeba).